We begin with the raw amino-acid sequence, 312 residues long: Taste receptor type 2 member 140 (312 aa).

The Extracellular portion of the chain corresponds to 1-9 (MKVTVECAL). Residues 10-30 (LITLIVEIIIGCLGNGFIAVV) form a helical membrane-spanning segment. The Cytoplasmic portion of the chain corresponds to 31–46 (NIMDWTKRRRFSLVDQ). A helical membrane pass occupies residues 47–67 (ILTALAISRLAFVWSLLTVLV). At 68–87 (ISELHSSLLITRKMLRIINN) the chain is on the extracellular side. Residues 88-108 (FWTVTNHFSIWLATCLSIFYF) traverse the membrane as a helical segment. Residues 109–133 (LKIANFSNSIFLSLRWRVKTVVSLT) lie on the Cytoplasmic side of the membrane. Residues 134-154 (LLVSLLLLLVNVIIINTCIVI) form a helical membrane-spanning segment. At 155 to 185 (SVEGYKVNMSYSSHFNNNPQISRIPLFTNTM) the chain is on the extracellular side. A glycan (N-linked (GlcNAc...) asparagine) is linked at Asn-162. A helical membrane pass occupies residues 186-206 (FTFIPFTVTLTIFLLLIFSLW). The Cytoplasmic segment spans residues 207–229 (RHLKKMQHRAKGPRDPSTTAHIK). Residues 230–250 (ALQMVVTFLFLYTIFFLALVM) traverse the membrane as a helical segment. Residues 251–264 (QAWNNEIQSKTVFN) are Extracellular-facing. A helical transmembrane segment spans residues 265–285 (LVFESIALAFPSGHSCVLILG). The Cytoplasmic portion of the chain corresponds to 286–312 (NSKLRQAFLTIIWWLRSSFNAAELSSP).

The protein belongs to the G-protein coupled receptor T2R family.

It is found in the membrane. In terms of biological role, putative taste receptor which may play a role in the perception of bitterness. In Rattus norvegicus (Rat), this protein is Taste receptor type 2 member 140.